A 320-amino-acid polypeptide reads, in one-letter code: Putative membrane-bound redox modulator Alx (320 aa).

At 1 to 6 the chain is on the periplasmic side; it reads MNTVGT. A helical transmembrane segment spans residues 7-27; sequence PLLWGGFAVVVAIMLAIDLLL. Over 28 to 43 the chain is Cytoplasmic; that stretch reads QGRRGAHAMTMKQAAA. A helical membrane pass occupies residues 44–64; sequence WSLVWVTLSLLFNAAFWWYLV. At 65-89 the chain is on the periplasmic side; that stretch reads QTEGRAVADPQALAFLTGYLIEKSL. Residues 90 to 110 traverse the membrane as a helical segment; the sequence is AVDNVFVWLMLFSYFSVPAAL. The Cytoplasmic portion of the chain corresponds to 111–113; the sequence is QRR. The helical transmembrane segment at 114-134 threads the bilayer; the sequence is VLVYGVLGAIVLRTIMIFTGS. Residue Trp135 is a topological domain, periplasmic. A helical transmembrane segment spans residues 136-156; it reads LISQFDWILYIFGAFLLFTGV. At 157-198 the chain is on the cytoplasmic side; it reads KMALAHEDESGIGDKPLVRWLRGHLRMTDTIDNEHFFVRKNG. Residues 199-219 traverse the membrane as a helical segment; that stretch reads LLYATPLMLVLILVELSDVIF. Residues 220 to 225 lie on the Periplasmic side of the membrane; sequence AVDSIP. A helical transmembrane segment spans residues 226–246; sequence AIFAVTTDPFIVLTSNLFAIL. Topologically, residues 247–261 are cytoplasmic; the sequence is GLRAMYFLLAGVAER. Residues 262 to 282 traverse the membrane as a helical segment; the sequence is FSMLKYGLAVILVFIGIKMLI. Residues 283 to 286 are Periplasmic-facing; sequence VDFY. Residues 287 to 307 traverse the membrane as a helical segment; that stretch reads HIPIAVSLGVVFGILVMTFII. The Cytoplasmic portion of the chain corresponds to 308-320; it reads NAWVNYRHDKQRG.

This sequence belongs to the TerC family.

The protein localises to the cell inner membrane. Functionally, has been proposed to be a redox modulator. The polypeptide is Putative membrane-bound redox modulator Alx (alx) (Shigella flexneri).